The chain runs to 319 residues: Olfactory receptor 10Q1 (319 aa).

The Extracellular segment spans residues 1–29 (MPVGKLVFNQSEPTEFVFRAFTTATEFQV). An N-linked (GlcNAc...) asparagine glycan is attached at Asn-9. A helical transmembrane segment spans residues 30 to 50 (LLFLLFLLLYLMILCGNTAII). The Cytoplasmic segment spans residues 51–58 (WVVCTHST). The chain crosses the membrane as a helical span at residues 59 to 79 (LRTPMYFFLSNLSFLELCYTT). Residues 80-103 (VVVPLMLSNILGAQKPISLAGCGA) lie on the Extracellular side of the membrane. A disulfide bond links Cys-101 and Cys-194. The helical transmembrane segment at 104–124 (QMFFFVTLGSTDCFLLAIMAY) threads the bilayer. Topologically, residues 125–143 (DRYVAICHPLHYTLIMTRE) are cytoplasmic. A helical membrane pass occupies residues 144 to 164 (LCTQMLGGALGLALFPSLQLT). Residues 165–202 (ALIFTLPFCGHHQEINHFLCDVPPVLRLACADIRVHQA) are Extracellular-facing. Residues 203-222 (VLYVVSILVLTIPFLLICVS) traverse the membrane as a helical segment. The Cytoplasmic portion of the chain corresponds to 223–242 (YVFITCAILSIRSAEGRRRA). A helical transmembrane segment spans residues 243-263 (FSTCSFHLTVVLLQYGCCSLV). The Extracellular segment spans residues 264 to 276 (YLRPRSSTSEDED). Residues 277–297 (SQIALVYTFVTPLLNPLLYSL) traverse the membrane as a helical segment. The Cytoplasmic segment spans residues 298–319 (RNKDVKGALRSAIIRKAASDAN).

The protein belongs to the G-protein coupled receptor 1 family.

The protein localises to the cell membrane. Odorant receptor. This Homo sapiens (Human) protein is Olfactory receptor 10Q1 (OR10Q1).